Reading from the N-terminus, the 286-residue chain is Bifunctional protein FolD (286 aa).

NADP(+) contacts are provided by residues 160-162 (GRS), Ser-189, and Thr-230.

It belongs to the tetrahydrofolate dehydrogenase/cyclohydrolase family. In terms of assembly, homodimer.

The catalysed reaction is (6R)-5,10-methylene-5,6,7,8-tetrahydrofolate + NADP(+) = (6R)-5,10-methenyltetrahydrofolate + NADPH. It carries out the reaction (6R)-5,10-methenyltetrahydrofolate + H2O = (6R)-10-formyltetrahydrofolate + H(+). The protein operates within one-carbon metabolism; tetrahydrofolate interconversion. In terms of biological role, catalyzes the oxidation of 5,10-methylenetetrahydrofolate to 5,10-methenyltetrahydrofolate and then the hydrolysis of 5,10-methenyltetrahydrofolate to 10-formyltetrahydrofolate. The chain is Bifunctional protein FolD from Chlamydia pneumoniae (Chlamydophila pneumoniae).